The following is a 155-amino-acid chain: Large ribosomal subunit protein uL11 (155 aa).

It belongs to the universal ribosomal protein uL11 family. As to quaternary structure, part of the ribosomal stalk of the 50S ribosomal subunit. Interacts with L10 and the large rRNA to form the base of the stalk. L10 forms an elongated spine to which L12 dimers bind in a sequential fashion forming a multimeric L10(L12)X complex. Post-translationally, one or more lysine residues are methylated.

In terms of biological role, forms part of the ribosomal stalk which helps the ribosome interact with GTP-bound translation factors. This Malacoplasma penetrans (strain HF-2) (Mycoplasma penetrans) protein is Large ribosomal subunit protein uL11.